A 493-amino-acid chain; its full sequence is Cysteine--tRNA ligase (493 aa).

Residue C41 coordinates Zn(2+). Positions 43–53 match the 'HIGH' region motif; it reads PTVYNYPHIGN. Positions 231, 256, and 260 each coordinate Zn(2+). The 'KMSKS' region signature appears at 296–300; that stretch reads KMSKS. K299 contacts ATP.

The protein belongs to the class-I aminoacyl-tRNA synthetase family. As to quaternary structure, monomer. Zn(2+) serves as cofactor.

It is found in the cytoplasm. The catalysed reaction is tRNA(Cys) + L-cysteine + ATP = L-cysteinyl-tRNA(Cys) + AMP + diphosphate. In Novosphingobium aromaticivorans (strain ATCC 700278 / DSM 12444 / CCUG 56034 / CIP 105152 / NBRC 16084 / F199), this protein is Cysteine--tRNA ligase.